We begin with the raw amino-acid sequence, 51 residues long: Small ribosomal subunit protein eS31 (51 aa).

The Zn(2+) site is built by C21, C24, C39, and C42. The C4-type zinc-finger motif lies at 21–42 (CVRCSNGVFMADHGDRYACGKC).

It belongs to the eukaryotic ribosomal protein eS31 family. As to quaternary structure, part of the 30S ribosomal subunit. It depends on Zn(2+) as a cofactor.

In Methanothermobacter thermautotrophicus (strain ATCC 29096 / DSM 1053 / JCM 10044 / NBRC 100330 / Delta H) (Methanobacterium thermoautotrophicum), this protein is Small ribosomal subunit protein eS31.